The sequence spans 246 residues: Metallo-beta-lactamase type 2 (246 aa).

The first 20 residues, 1-20, serve as a signal peptide directing secretion; the sequence is MKKLFVLCVCFFCSITAAGA. Zn(2+) is bound by residues histidine 95, histidine 97, aspartate 99, histidine 157, and cysteine 176. Residue aspartate 99 coordinates a beta-lactam. A beta-lactam is bound by residues lysine 179 and asparagine 185. Histidine 215 is a Zn(2+) binding site.

This sequence belongs to the metallo-beta-lactamase superfamily. Class-B beta-lactamase family. Monomer. The cofactor is Zn(2+).

Its subcellular location is the periplasm. It catalyses the reaction a beta-lactam + H2O = a substituted beta-amino acid. Its function is as follows. Confers resistance to the different beta-lactam antibiotics (penicillin, cephalosporin and carbapenem) via the hydrolysis of the beta-lactam ring. Exhibits higher catalytic efficiency toward ticarcillin and piperacillin than blaIMP-1. Exhibits catalytic activity for carbapenem compounds, but has a preference for imipenem and ertapenem over meropenem. Has high efficiency for the hydrolysis of cefuroxime. Exhibits hydrolysis of all cephalosporins tested. Exhibits no hydrolysis of temocillin, the 6-alpha-methoxy semisynthetic derivative of ticarcillin. The polypeptide is Metallo-beta-lactamase type 2 (Pseudomonas aeruginosa).